The sequence spans 219 residues: Response regulator ArlR (219 aa).

One can recognise a Response regulatory domain in the interval Asn-3–Leu-116. Asp-52 is modified (4-aspartylphosphate). The ompR/PhoB-type DNA-binding region spans Lys-122–Arg-219.

In terms of processing, phosphorylated by ArlS.

Its subcellular location is the cytoplasm. Its function is as follows. Member of the two-component regulatory system ArlS/ArlR. This chain is Response regulator ArlR (arlR), found in Staphylococcus epidermidis (strain ATCC 12228 / FDA PCI 1200).